A 335-amino-acid chain; its full sequence is Cell division protein ZipA (335 aa).

At methionine 1–leucine 6 the chain is on the periplasmic side. A helical transmembrane segment spans residues valine 7–isoleucine 27. Over arginine 28–methionine 335 the chain is Cytoplasmic. 2 disordered regions span residues glutamate 37–valine 128 and arginine 163–glutamate 185. Positions alanine 170–glutamate 185 are enriched in low complexity.

The protein belongs to the ZipA family. As to quaternary structure, interacts with FtsZ via their C-terminal domains.

It localises to the cell inner membrane. Its function is as follows. Essential cell division protein that stabilizes the FtsZ protofilaments by cross-linking them and that serves as a cytoplasmic membrane anchor for the Z ring. Also required for the recruitment to the septal ring of downstream cell division proteins. In Shewanella loihica (strain ATCC BAA-1088 / PV-4), this protein is Cell division protein ZipA.